Here is a 1557-residue protein sequence, read N- to C-terminus: DVA-1 polyprotein (1557 aa).

Residues 1-21 (MKSTSFITLLLLSYFIVEAHS) form the signal peptide. The propeptide occupies 22-60 (SIFHWDDERLFKHDDTHSWLTDVQKAELETLKHQPIQLR). N-linked (GlcNAc...) asparagine glycosylation occurs at N997.

The protein belongs to the NPA family. Nematode polyprotein allergens (NPAs) are synthesized as large polypeptides that are subsequently proteolytically cleaved to active polypeptide units.

Has high binding affinity for fatty acids and retinoids. This Dictyocaulus viviparus (Bovine lungworm) protein is DVA-1 polyprotein (DVA-1).